Here is a 190-residue protein sequence, read N- to C-terminus: Vespryn-21 (190 aa).

The N-terminal stretch at 1-20 (MLLFTLCFFADLENGGKALA) is a signal peptide. Positions 21 to 127 (SPPGKWQKAD…LIWQRGLWFL (107 aa)) constitute a B30.2/SPRY domain. A propeptide spanning residues 128 to 190 (QRLETDSDKL…LGGGVSLTNL (63 aa)) is cleaved from the precursor.

Belongs to the ohanin/vespryn family. Expressed by the venom gland.

The protein resides in the secreted. Functionally, neurotoxin that produces dose-dependent hypolocomotion and hyperalgesia in mice. May directly act on the central nervous system, as it is 6500-fold more potent when administered intracerebroventricularly than intraperitoneal. This is Vespryn-21 from Drysdalia coronoides (White-lipped snake).